We begin with the raw amino-acid sequence, 84 residues long: Small, acid-soluble spore protein gamma-type (84 aa).

Polar residues-rich tracts occupy residues 1-25 (MANS…SAAG) and 34-44 (ASETNAQQVRK). The segment at 1–84 (MANSNNFSKT…SAEQNKQQNS (84 aa)) is disordered. Repeats lie at residues 21–47 (QSAA…KQNQ) and 48–74 (QSAG…QQNQ). Composition is skewed to low complexity over residues 45-57 (QNQQ…GQFG) and 71-84 (QQNQ…QQNS).

This sequence belongs to the gamma-type SASP family.

Functionally, SASP are proteins degraded in the first minutes of spore germination and provide amino acids for both new protein synthesis and metabolism. These proteins may be involved in dormant spore's high resistance to UV light. This is Small, acid-soluble spore protein gamma-type (sspE) from Bacillus subtilis (strain 168).